The sequence spans 150 residues: 3-hydroxyacyl-[acyl-carrier-protein] dehydratase FabZ (150 aa).

Histidine 54 is an active-site residue.

This sequence belongs to the thioester dehydratase family. FabZ subfamily.

Its subcellular location is the cytoplasm. It carries out the reaction a (3R)-hydroxyacyl-[ACP] = a (2E)-enoyl-[ACP] + H2O. In terms of biological role, involved in unsaturated fatty acids biosynthesis. Catalyzes the dehydration of short chain beta-hydroxyacyl-ACPs and long chain saturated and unsaturated beta-hydroxyacyl-ACPs. The sequence is that of 3-hydroxyacyl-[acyl-carrier-protein] dehydratase FabZ from Colwellia psychrerythraea (strain 34H / ATCC BAA-681) (Vibrio psychroerythus).